An 849-amino-acid chain; its full sequence is MAP7 domain-containing protein 1 (849 aa).

Disordered stretches follow at residues 1–151 (MESG…REER) and 186–210 (EQRLKAEQRRAALEERQRQKLEKNK). The span at 24 to 41 (EPRPSPEGDPSPPPPPTP) shows a compositional bias: pro residues. Phosphothreonine occurs at positions 49 and 53. Phosphoserine occurs at positions 72 and 95. A Phosphothreonine modification is found at threonine 99. Phosphoserine is present on residues serine 115 and serine 118. The residue at position 120 (threonine 120) is a Phosphothreonine. Serine 125 and serine 127 each carry phosphoserine. Over residues 132–151 (QDVKKAGERHKLAKERREER) the composition is skewed to basic and acidic residues. Positions 167–223 (EKAKALREKQLQERRRRLEEQRLKAEQRRAALEERQRQKLEKNKERYEAAIQRSVKK) form a coiled coil. Phosphoserine occurs at positions 256, 275, 315, 368, and 401. The tract at residues 318 to 815 (TLPRNGRDQG…GFPAKGTAGD (498 aa)) is disordered. Basic and acidic residues predominate over residues 407 to 437 (RRLEATPVQKKEKKDKERENEKEKSALARER). Phosphoserine occurs at positions 444, 448, 454, and 460. A compositionally biased stretch (polar residues) spans 457 to 474 (AELSTKSKARPTSPSTTW). A Glycyl lysine isopeptide (Lys-Gly) (interchain with G-Cter in SUMO2) cross-link involves residue lysine 462. Serine 479 and serine 496 each carry phosphoserine. Residues 479 to 497 (SPCPSPGPGHTLPPKPPSP) show a composition bias toward pro residues. The segment covering 523 to 539 (PEDKNHSKSRTAEEKEP) has biased composition (basic and acidic residues). The segment covering 542–556 (PASPAPSPVPSPTPA) has biased composition (pro residues). Phosphoserine occurs at positions 544, 548, and 552. Phosphothreonine is present on threonine 554. A compositionally biased stretch (low complexity) spans 568–582 (PPDTAVPAVPTVPTF). Residues 602 to 724 (TTDREEATRL…QERRKRLEEI (123 aa)) are a coiled coil. The segment covering 603–743 (TDREEATRLL…AETKKQDGKE (141 aa)) has biased composition (basic and acidic residues).

The protein belongs to the MAP7 family.

Its subcellular location is the cytoplasm. The protein localises to the cytoskeleton. The protein resides in the spindle. It localises to the microtubule organizing center. It is found in the centrosome. Its subcellular location is the midbody. Microtubule-stabilizing protein involved in the control of cell motility and neurite outgrowth. Facilitate microtubule stabilization through the maintenance of acetylated stable microtubules. This chain is MAP7 domain-containing protein 1 (Map7d1), found in Rattus norvegicus (Rat).